Reading from the N-terminus, the 85-residue chain is Large ribosomal subunit protein bL27 (85 aa).

A disordered region spans residues 1-23 (MAHKKGQGSTQNNRDSAGRRLGV).

This sequence belongs to the bacterial ribosomal protein bL27 family.

This is Large ribosomal subunit protein bL27 from Helicobacter hepaticus (strain ATCC 51449 / 3B1).